The primary structure comprises 373 residues: Queuine tRNA-ribosyltransferase (373 aa).

Residue Asp-90 is the Proton acceptor of the active site. Substrate is bound by residues 90-94, Asp-144, Gln-193, and Gly-220; that span reads DSGGF. Residues 251 to 257 are RNA binding; it reads GVGTPED. Asp-270 functions as the Nucleophile in the catalytic mechanism. Positions 275–279 are RNA binding; important for wobble base 34 recognition; that stretch reads TRNAR. The Zn(2+) site is built by Cys-308, Cys-310, Cys-313, and His-339.

Belongs to the queuine tRNA-ribosyltransferase family. In terms of assembly, homodimer. Within each dimer, one monomer is responsible for RNA recognition and catalysis, while the other monomer binds to the replacement base PreQ1. It depends on Zn(2+) as a cofactor.

It carries out the reaction 7-aminomethyl-7-carbaguanine + guanosine(34) in tRNA = 7-aminomethyl-7-carbaguanosine(34) in tRNA + guanine. Its pathway is tRNA modification; tRNA-queuosine biosynthesis. Its function is as follows. Catalyzes the base-exchange of a guanine (G) residue with the queuine precursor 7-aminomethyl-7-deazaguanine (PreQ1) at position 34 (anticodon wobble position) in tRNAs with GU(N) anticodons (tRNA-Asp, -Asn, -His and -Tyr). Catalysis occurs through a double-displacement mechanism. The nucleophile active site attacks the C1' of nucleotide 34 to detach the guanine base from the RNA, forming a covalent enzyme-RNA intermediate. The proton acceptor active site deprotonates the incoming PreQ1, allowing a nucleophilic attack on the C1' of the ribose to form the product. After dissociation, two additional enzymatic reactions on the tRNA convert PreQ1 to queuine (Q), resulting in the hypermodified nucleoside queuosine (7-(((4,5-cis-dihydroxy-2-cyclopenten-1-yl)amino)methyl)-7-deazaguanosine). This is Queuine tRNA-ribosyltransferase from Campylobacter jejuni subsp. jejuni serotype O:2 (strain ATCC 700819 / NCTC 11168).